Consider the following 227-residue polypeptide: Mediator of RNA polymerase II transcription subunit 18 (227 aa).

This sequence belongs to the Mediator complex subunit 18 family. Component of the Mediator complex.

The protein localises to the nucleus. Functionally, component of the Mediator complex, a coactivator involved in the regulated transcription of nearly all RNA polymerase II-dependent genes. Mediator functions as a bridge to convey information from gene-specific regulatory proteins to the basal RNA polymerase II transcription machinery. Mediator is recruited to promoters by direct interactions with regulatory proteins and serves as a scaffold for the assembly of a functional preinitiation complex with RNA polymerase II and the general transcription factors. The sequence is that of Mediator of RNA polymerase II transcription subunit 18 (mdt-18) from Caenorhabditis briggsae.